Reading from the N-terminus, the 244-residue chain is Phosphoadenosine 5'-phosphosulfate reductase (244 aa).

The active-site Nucleophile; cysteine thiosulfonate intermediate is the C239.

The protein belongs to the PAPS reductase family. CysH subfamily.

The protein resides in the cytoplasm. It carries out the reaction [thioredoxin]-disulfide + sulfite + adenosine 3',5'-bisphosphate + 2 H(+) = [thioredoxin]-dithiol + 3'-phosphoadenylyl sulfate. It participates in sulfur metabolism; hydrogen sulfide biosynthesis; sulfite from sulfate: step 3/3. Catalyzes the formation of sulfite from phosphoadenosine 5'-phosphosulfate (PAPS) using thioredoxin as an electron donor. The sequence is that of Phosphoadenosine 5'-phosphosulfate reductase from Pectobacterium carotovorum subsp. carotovorum (strain PC1).